Consider the following 177-residue polypeptide: R-phycoerythrin beta chain (177 aa).

The (2R,3E)-phycoerythrobilin site is built by Asn-35 and Asp-39. Phycourobilin contacts are provided by Cys-50, Asp-54, and Cys-61. (2R,3E)-phycoerythrobilin-binding positions include Asn-72, 77 to 78 (RR), Cys-82, and 84 to 85 (RD). Asn-72 is subject to N4-methylasparagine. 147–148 (SG) is a phycourobilin binding site. Cys-158 is a (2R,3E)-phycoerythrobilin binding site.

This sequence belongs to the phycobiliprotein family. Heterododecamer of 6 alpha and 6 beta chains. The basic functional unit of phycobiliproteins is a ring-shaped hexamer formed from two back-to-back trimers contacting via the alpha chain subunits. The trimers are composed of alpha/beta subunit heterodimers arranged around a three-fold axis of symmetry. The phycoerythrins also contain a gamma subunit which is located in the center of the hexamer. Contains two covalently linked phycoerythrobilin chromophores and one covalently linked phycourobilin chromophore.

The protein localises to the plastid. It is found in the chloroplast thylakoid membrane. Functionally, light-harvesting photosynthetic tetrapyrrole chromophore-protein from the phycobiliprotein complex. This Griffithsia monilis (Red alga) protein is R-phycoerythrin beta chain (cpeB).